A 438-amino-acid chain; its full sequence is GTPase Der (438 aa).

2 consecutive EngA-type G domains span residues 4–168 (PIVA…PKGY) and 177–352 (IRIA…TNYS). Residues 10–17 (GRPNVGKS), 57–61 (DTGGI), 120–123 (NKID), 183–190 (GKPNVGKS), 230–234 (DTAGL), and 295–298 (NKWD) each bind GTP. Residues 353–437 (KRISTGVLND…GIKMEFRERK (85 aa)) form the KH-like domain.

Belongs to the TRAFAC class TrmE-Era-EngA-EngB-Septin-like GTPase superfamily. EngA (Der) GTPase family. In terms of assembly, associates with the 50S ribosomal subunit.

In terms of biological role, GTPase that plays an essential role in the late steps of ribosome biogenesis. The polypeptide is GTPase Der (Clostridium tetani (strain Massachusetts / E88)).